A 154-amino-acid chain; its full sequence is 6,7-dimethyl-8-ribityllumazine synthase (154 aa).

Residues F22, 56–58 (AFE), and 81–83 (VLI) contribute to the 5-amino-6-(D-ribitylamino)uracil site. 86–87 (ET) provides a ligand contact to (2S)-2-hydroxy-3-oxobutyl phosphate. Catalysis depends on H89, which acts as the Proton donor. A 5-amino-6-(D-ribitylamino)uracil-binding site is contributed by F114. Position 128 (R128) interacts with (2S)-2-hydroxy-3-oxobutyl phosphate.

Belongs to the DMRL synthase family.

It catalyses the reaction (2S)-2-hydroxy-3-oxobutyl phosphate + 5-amino-6-(D-ribitylamino)uracil = 6,7-dimethyl-8-(1-D-ribityl)lumazine + phosphate + 2 H2O + H(+). The protein operates within cofactor biosynthesis; riboflavin biosynthesis; riboflavin from 2-hydroxy-3-oxobutyl phosphate and 5-amino-6-(D-ribitylamino)uracil: step 1/2. Its function is as follows. Catalyzes the formation of 6,7-dimethyl-8-ribityllumazine by condensation of 5-amino-6-(D-ribitylamino)uracil with 3,4-dihydroxy-2-butanone 4-phosphate. This is the penultimate step in the biosynthesis of riboflavin. The protein is 6,7-dimethyl-8-ribityllumazine synthase of Chlamydia abortus (strain DSM 27085 / S26/3) (Chlamydophila abortus).